The sequence spans 398 residues: Chalcone synthase 1 (398 aa).

58–65 (KFKRMCDK) serves as a coordination point for CoA. Catalysis depends on Cys167, which acts as the Acyl-thioester intermediate. Substrate contacts are provided by residues Thr200 and 219-220 (GD). Ala311 is a CoA binding site.

The protein belongs to the thiolase-like superfamily. Chalcone/stilbene synthases family. Homodimer.

The enzyme catalyses (E)-4-coumaroyl-CoA + 3 malonyl-CoA + 3 H(+) = 2',4,4',6'-tetrahydroxychalcone + 3 CO2 + 4 CoA. Its pathway is secondary metabolite biosynthesis; flavonoid biosynthesis. In terms of biological role, the primary product of this enzyme is 4,2',4',6'-tetrahydroxychalcone (also termed naringenin-chalcone or chalcone) which can under specific conditions spontaneously isomerize into naringenin. The sequence is that of Chalcone synthase 1 (CHS1) from Oryza sativa subsp. indica (Rice).